We begin with the raw amino-acid sequence, 286 residues long: Energy-coupling factor transporter ATP-binding protein EcfA2 (286 aa).

An ABC transporter domain is found at 3–246; it reads IRFDNVSYTY…KKKLADWHIG (244 aa). 40–47 is a binding site for ATP; it reads GQTGSGKS.

It belongs to the ABC transporter superfamily. Energy-coupling factor EcfA family. Forms a stable energy-coupling factor (ECF) transporter complex composed of 2 membrane-embedded substrate-binding proteins (S component), 2 ATP-binding proteins (A component) and 2 transmembrane proteins (T component).

It localises to the cell membrane. Its function is as follows. ATP-binding (A) component of a common energy-coupling factor (ECF) ABC-transporter complex. Unlike classic ABC transporters this ECF transporter provides the energy necessary to transport a number of different substrates. In Staphylococcus aureus (strain USA300), this protein is Energy-coupling factor transporter ATP-binding protein EcfA2.